Consider the following 382-residue polypeptide: Pyrimidine monooxygenase RutA (382 aa).

FMN contacts are provided by residues 68–69, Asn-134, Glu-143, 159–160, and Ser-209; these read IK and RY.

This sequence belongs to the NtaA/SnaA/DszA monooxygenase family. RutA subfamily.

The catalysed reaction is uracil + FMNH2 + NADH + O2 = (Z)-3-ureidoacrylate + FMN + NAD(+) + H2O + H(+). The enzyme catalyses thymine + FMNH2 + NADH + O2 = (Z)-2-methylureidoacrylate + FMN + NAD(+) + H2O + H(+). Catalyzes the pyrimidine ring opening between N-3 and C-4 by an unusual flavin hydroperoxide-catalyzed mechanism, adding oxygen atoms in the process to yield ureidoacrylate peracid, that immediately reacts with FMN forming ureidoacrylate and FMN-N(5)-oxide. The FMN-N(5)-oxide reacts spontaneously with NADH to produce FMN. Requires the flavin reductase RutF to regenerate FMN in vivo. This Escherichia coli O55:H7 (strain CB9615 / EPEC) protein is Pyrimidine monooxygenase RutA.